A 357-amino-acid chain; its full sequence is Glutamate 5-kinase (357 aa).

Position 7 (Lys-7) interacts with ATP. Positions 43, 130, and 142 each coordinate substrate. An ATP-binding site is contributed by Thr-162 to Asp-163. Positions Gln-270–Val-347 constitute a PUA domain.

It belongs to the glutamate 5-kinase family.

It is found in the cytoplasm. The catalysed reaction is L-glutamate + ATP = L-glutamyl 5-phosphate + ADP. Its pathway is amino-acid biosynthesis; L-proline biosynthesis; L-glutamate 5-semialdehyde from L-glutamate: step 1/2. Functionally, catalyzes the transfer of a phosphate group to glutamate to form L-glutamate 5-phosphate. This Parasynechococcus marenigrum (strain WH8102) protein is Glutamate 5-kinase.